Consider the following 300-residue polypeptide: MILFDYKLLAALAAVVEQGGFERAAQALGLSQSAVSQRIKLLEARVGQPVLVRETPPHPTDLGRRLLNHVQQVRLLEGDLQRWVPNLDEGGAPERLRIALNADSLATWWAAAVGDFCAERRVLLDLVVEDQEVGLKRMRAGEVAGCVCGSARPVAGARSLLLGAMRYRGLASPDFIARHFPRGVEAAALAGVPAIVFGPDDLLQHRFLKDLGVEGGFIHHLCPSSEGFVRLTAGGLGWGLVPERQVQGELARGELVELLPGQVIDVPLYWHYWRNGGELLASLTEHLLARAGDGLVRVSG.

An HTH lysR-type domain is found at 4-60 (FDYKLLAALAAVVEQGGFERAAQALGLSQSAVSQRIKLLEARVGQPVLVRETPPHPT). The segment at residues 21 to 40 (FERAAQALGLSQSAVSQRIK) is a DNA-binding region (H-T-H motif).

It belongs to the LysR transcriptional regulatory family. Homodimer.

Functionally, controls the transcription of genes involved in arginine and lysine metabolism. The protein is HTH-type transcriptional regulator ArgP of Pseudomonas aeruginosa (strain UCBPP-PA14).